A 1014-amino-acid chain; its full sequence is Nebulette (1014 aa).

Residues 1 to 24 are disordered; it reads MRVPVFEDIKDETEEEKIGEEENE. Residues 9–24 show a composition bias toward acidic residues; the sequence is IKDETEEEKIGEEENE. Nebulin repeat units lie at residues 29-63, 64-99, 100-136, 137-172, 173-205, 206-241, 242-278, 279-313, 314-348, 349-385, 386-422, 423-459, 460-496, 497-533, 534-569, 570-599, 600-635, 636-666, 667-693, 694-728, 729-759, 760-794, and 795-830; these read FYKP…KSKD, KCTF…DLSN, SLYK…AKGF, SDYA…DTHT, YSAE…GIMN, KEPA…EMKD, KKHH…NMHD, PVSD…ENKG, MYHF…KNKG, KPML…EIKG, RSSL…EIKG, KGME…IIKG, KGMQ…EIKG, KGMQ…KMLS, NYST…KKEV, GAGT…HATA, ISDP…KATP, VSMT…GELQ, RGTA…RATT, LSVT…QMKG, RPSL…KTKG, and RGFT…HIVE. Residue Asp96 is modified to Omega-N-methylarginine. Arg795 carries the post-translational modification Omega-N-methylarginine. The linker stretch occupies residues 836-953; it reads GIIVDLKVWR…VSSMRSMQHS (118 aa). One can recognise an SH3 domain in the interval 954–1014; sequence PNLRTYRAMY…LPANYIEFVN (61 aa).

In terms of assembly, interacts (via nebulin repeats 1-5) with DESM (via rod region). Interacts (via SH3 domain) with XIRP2. As to quaternary structure, interacts with ZYX/Zyxin. Abundantly expressed in cardiac muscle, but not in skeletal or smooth muscle. Localized to Z-lines in cardiac cells and to dense bodies in nonmuscle cells. Isoform 2 is expressed in non-muscle cells such as in fibroblasts.

It localises to the cytoplasm. Its function is as follows. Binds to actin and plays an important role in the assembly of the Z-disk. May functionally link sarcomeric actin to the desmin intermediate filaments in the heart muscle sarcomeres. May play a role in the assembly of focal adhesions. The polypeptide is Nebulette (Homo sapiens (Human)).